A 220-amino-acid chain; its full sequence is Sericin-2 (220 aa).

2 stretches are compositionally biased toward low complexity: residues 1-131 (SSST…ASSS) and 141-155 (NESS…QNSA). The interval 1 to 220 (SSSTNNSSGS…SSSSSSWSSA (220 aa)) is disordered. The span at 156-165 (TRSQVINADG) shows a compositional bias: polar residues. The segment covering 166–220 (SQSSSSSSSSASNQASATSSSSVSADGSESESSSSSSSSSSSSSESSSSSSWSSA) has biased composition (low complexity).

As to expression, produced exclusively in the middle (MSG) section of silk glands.

Its subcellular location is the secreted. Functionally, provides the silk fibroin thread with a sticky coating. Acts as a cement by sticking silk threads together. In Galleria mellonella (Greater wax moth), this protein is Sericin-2 (SER2).